The chain runs to 570 residues: Probable metalloreductase AIM14 (570 aa).

Helical transmembrane passes span Ile21–Leu41, Ala70–Leu90, Leu101–Arg118, Ile142–Asp162, Phe177–Met197, Leu204–Ser224, and Phe230–Phe250. The Ferric oxidoreductase domain maps to Leu101 to Leu219. Residues Phe250–Pro388 enclose the FAD-binding FR-type domain. Polar residues predominate over residues Ser481 to Asn505. Positions Ser481–Ser507 are disordered.

This sequence belongs to the ferric reductase (FRE) family. AIM14 subfamily. As to quaternary structure, interacts with ribosomes.

The protein resides in the membrane. Its function is as follows. Probable cell surface metalloreductase. May be involved in iron or copper homeostasis. In Saccharomyces cerevisiae (strain YJM789) (Baker's yeast), this protein is Probable metalloreductase AIM14 (AIM14).